The sequence spans 276 residues: Cholesterol 25-hydroxylase-like protein 1, member 2 (276 aa).

Residue Asn30 is glycosylated (N-linked (GlcNAc...) asparagine). The next 3 helical transmembrane spans lie at 39 to 59 (LFPVVLTVSSYFVLVLPYLSC), 90 to 110 (GVTLYNHILLVIPAAVAQWMW), and 126 to 146 (LVGGVTGNLLLFDLQYFIWHF). The Fatty acid hydroxylase domain maps to 134–265 (LLLFDLQYFI…FSHWDKMFGT (132 aa)). Positions 144 to 148 (WHFLH) match the Histidine box-1 motif. The Histidine box-2 signature appears at 159–163 (HAIHH). The N-linked (GlcNAc...) asparagine glycan is linked to Asn164. 2 helical membrane passes run 175–195 (CLGGWELVTVGFWTTLNPVLL) and 199–219 (LLTTWMFMVVHVYVSVEDHCG). A Histidine box-3 motif is present at residues 240 to 246 (KHDVHHQ).

It belongs to the sterol desaturase family. It depends on Fe cation as a cofactor.

The protein resides in the endoplasmic reticulum membrane. In terms of biological role, may catalyze the formation of 25-hydroxycholesterol from cholesterol. The protein is Cholesterol 25-hydroxylase-like protein 1, member 2 of Danio rerio (Zebrafish).